The chain runs to 163 residues: General stress protein 16O (163 aa).

A compositionally biased stretch (basic and acidic residues) spans 19–30 (QKELSGEKKETE). 2 disordered regions span residues 19-55 (QKELSGEKKETESMTEEVGELSNGVDNHMADHGTLVT) and 115-163 (ADVE…QDSK). The dksA C4-type; degenerate zinc finger occupies 89–123 (CEKTGQEIPYERLEAVPYARMTVEAQADVEDDLET). Positions 127 to 146 (SYEREFHEQVKDLSNKETID) are enriched in basic and acidic residues.

The protein is General stress protein 16O (yocK) of Bacillus subtilis (strain 168).